The following is a 549-amino-acid chain: SH3 domain-containing protein 21 (549 aa).

Residues 1 to 56 form a disordered region; that stretch reads MVQSELQLQPRAGRRADASNWGDFGSDKGGLGNTDIPPITPNSQRPPKLSNLTYDS. Polar residues predominate over residues 41–54; that stretch reads PNSQRPPKLSNLTY. Residues 65–126 form the SH3 domain; that stretch reads SCPETCRVLF…PDNFVIPPPP (62 aa). 2 disordered regions span residues 142–303 and 332–479; these read PIKE…KPAK and FKKE…KSKN. The span at 211 to 220 shows a compositional bias: low complexity; that stretch reads QASQQHSASS. Basic and acidic residues-rich tracts occupy residues 267 to 280 and 332 to 342; these read PVPKKAPDSDKIPA and FKKEPSRDNDQ. Composition is skewed to polar residues over residues 343–365 and 439–456; these read CQHLPQGGSTQRPESPAPSNNIQ and VLPQESAPTPQVPHTIQQ. Residues 482 to 510 are a coiled coil; that stretch reads MDVLESLKEEVGLLRSRLELLELKLEQKM. The disordered stretch occupies residues 528 to 549; that stretch reads QMMQRNRKSFKHAETQTETQTE.

This is SH3 domain-containing protein 21 (Sh3d21) from Mus musculus (Mouse).